Consider the following 277-residue polypeptide: Diaminopimelate epimerase (277 aa).

Substrate-binding residues include Asn-13, Gln-46, and Asn-66. Catalysis depends on Cys-75, which acts as the Proton donor. Substrate-binding positions include 76–77 (GN), Asn-160, Asn-193, and 211–212 (ER). Cys-220 functions as the Proton acceptor in the catalytic mechanism. Position 221–222 (221–222 (GS)) interacts with substrate.

Belongs to the diaminopimelate epimerase family. Homodimer.

It is found in the cytoplasm. It carries out the reaction (2S,6S)-2,6-diaminopimelate = meso-2,6-diaminopimelate. It functions in the pathway amino-acid biosynthesis; L-lysine biosynthesis via DAP pathway; DL-2,6-diaminopimelate from LL-2,6-diaminopimelate: step 1/1. Functionally, catalyzes the stereoinversion of LL-2,6-diaminopimelate (L,L-DAP) to meso-diaminopimelate (meso-DAP), a precursor of L-lysine and an essential component of the bacterial peptidoglycan. This chain is Diaminopimelate epimerase, found in Legionella pneumophila subsp. pneumophila (strain Philadelphia 1 / ATCC 33152 / DSM 7513).